A 404-amino-acid chain; its full sequence is Phosphopentomutase (404 aa).

Residues Asp-10, Asp-303, His-308, Asp-344, His-345, and His-356 each coordinate Mn(2+).

Belongs to the phosphopentomutase family. The cofactor is Mn(2+).

It localises to the cytoplasm. The enzyme catalyses 2-deoxy-alpha-D-ribose 1-phosphate = 2-deoxy-D-ribose 5-phosphate. The catalysed reaction is alpha-D-ribose 1-phosphate = D-ribose 5-phosphate. It functions in the pathway carbohydrate degradation; 2-deoxy-D-ribose 1-phosphate degradation; D-glyceraldehyde 3-phosphate and acetaldehyde from 2-deoxy-alpha-D-ribose 1-phosphate: step 1/2. Isomerase that catalyzes the conversion of deoxy-ribose 1-phosphate (dRib-1-P) and ribose 1-phosphate (Rib-1-P) to deoxy-ribose 5-phosphate (dRib-5-P) and ribose 5-phosphate (Rib-5-P), respectively. The protein is Phosphopentomutase of Shewanella sp. (strain W3-18-1).